A 236-amino-acid polypeptide reads, in one-letter code: SPbeta prophage-derived uncharacterized protein YomV (236 aa).

The sequence is that of SPbeta prophage-derived uncharacterized protein YomV (yomV) from Bacillus subtilis (strain 168).